The primary structure comprises 2442 residues: CREB-binding protein (2442 aa).

Disordered stretches follow at residues 1–41 (MAEN…NDLP) and 74–179 (LRGG…CMNA). Ala2 is modified (N-acetylalanine). The segment covering 20–30 (PGFSANDSTDF) has biased composition (polar residues). The segment covering 80–90 (SSINPGIGNVS) has biased composition (low complexity). Ser121 carries the post-translational modification Phosphoserine. Residues 122–131 (PLSQGDSSAP) are compositionally biased toward polar residues. A Phosphoserine; by ATM modification is found at Ser124. Residues 136-150 (QAASTSGPTPAASQA) are compositionally biased toward low complexity. Over residues 151-172 (LNPQAQKQVGLATSSPATSQTG) the composition is skewed to polar residues. Arg220 carries the post-translational modification Omega-N-methylarginine. The segment at 227–410 (PTPAMQGASS…GKACQVAHCA (184 aa)) is interaction with SRCAP. The interval 266 to 290 (KMGITGNTSPFGQPFSQAGGQPMGA) is disordered. Residues 270-284 (TGNTSPFGQPFSQAG) are compositionally biased toward polar residues. A TAZ-type 1 zinc finger spans residues 347–433 (DPEKRKLIQQ…RHDCPVCLPL (87 aa)). Zn(2+) contacts are provided by His363, Cys367, Cys380, Cys385, His394, Cys398, Cys404, Cys409, His418, Cys422, Cys427, and Cys430. One can recognise a KIX domain in the interval 587–666 (GVRKGWHEHV…KIYKIQKELE (80 aa)). An asymmetric dimethylarginine mark is found at Arg601 and Arg625. Position 657 is an N6-acetyllysine (Lys657). 2 stretches are compositionally biased toward polar residues: residues 794 to 805 (LPQNQFPSSSGA) and 814 to 823 (PAQTGVSQGQ). A disordered region spans residues 794–1083 (LPQNQFPSSS…STSPSQPRKK (290 aa)). Composition is skewed to pro residues over residues 844 to 860 (PCPP…PPPA) and 876 to 885 (GMTPPQPAAP). Composition is skewed to low complexity over residues 886 to 929 (TQPS…VTPQ) and 937 to 952 (PSVA…PTPV). A compositionally biased stretch (polar residues) spans 973–988 (PTPSSVASAETNSQQP). Lys998 is covalently cross-linked (Glycyl lysine isopeptide (Lys-Gly) (interchain with G-Cter in SUMO1)). The segment covering 1011–1021 (GESKGEPRSEM) has biased composition (basic and acidic residues). Lys1014 carries the post-translational modification N6-acetyllysine. At Ser1030 the chain carries Phosphoserine. Residues 1032 to 1059 (VKEETDIAEQKSEPMEVDEKKPEVKVEV) are compositionally biased toward basic and acidic residues. Residues Lys1033 and Lys1056 each participate in a glycyl lysine isopeptide (Lys-Gly) (interchain with G-Cter in SUMO1) cross-link. Residues 1066–1078 (SSNGTASQSTSPS) are compositionally biased toward low complexity. Ser1076 is modified (phosphoserine). One can recognise a Bromo domain in the interval 1085–1192 (FKPEELRQAL…EVFEQEIDPV (108 aa)). The tract at residues 1124–1170 (DYFDIVKNPMDLSTIKRKLDTGQYQEPWQYVDDVWLMFNNAWLYNRK) is interaction with histone. Positions 1162–1180 (NNAWLYNRKTSRVYKFCSK) are interaction with ASF1A. At Lys1216 the chain carries N6-acetyllysine. Residues 1323 to 1700 (KFSAKRLQTT…MLVELHTQGQ (378 aa)) form the CBP/p300-type HAT domain. Residues Ser1382 and Ser1386 each carry the phosphoserine; by IKKA modification. The interaction with histone stretch occupies residues 1433 to 1435 (YLD). Acetyl-CoA-binding positions include 1434–1436 (LDS), 1446–1447 (RT), Ile1493, Arg1498, and Trp1502. Positions 1460-1891 (YVKKLGYVTG…LPSPTSAPPG (432 aa)) are interaction with TRERF1. Basic and acidic residues predominate over residues 1556 to 1568 (LEQEEEERKKEES). Residues 1556 to 1615 (LEQEEEERKKEESTAASETTEGSQGDSKNAKKKNNKKTNKNKSSISRANKKKPSMPNVSN) form a disordered region. An N6-acetyllysine mark is found at Lys1583, Lys1591, Lys1592, Lys1595, and Lys1597. The segment covering 1585-1595 (AKKKNNKKTNK) has biased composition (basic residues). The ZZ-type zinc finger occupies 1702 to 1750 (RFVYTCNECKHHVETRWHCTVCEDYDLCINCYNTKSHAHKMVKWGLGLD). Positions 1707, 1710, 1720, 1723, 1729, 1732, 1738, and 1740 each coordinate Zn(2+). N6-acetyllysine is present on residues Lys1741 and Lys1744. Residue Ser1763 is modified to Phosphoserine. Residues 1765–1846 (QESRRLSIQR…KCPVPFCLNI (82 aa)) form a TAZ-type 2 zinc finger. 2 disordered regions span residues 1874–1959 (TRNV…VEAA) and 1977–2028 (INNS…PLPQ). Residues 1900–1912 (PQTPQPPAQPQPS) are compositionally biased toward pro residues. The span at 1925–1940 (ARTQPPTTVSTGKPTS) shows a compositional bias: polar residues. The segment covering 1943-1954 (PAPPPPAQPPPA) has biased composition (pro residues). The span at 2018 to 2027 (PGQWQQAPLP) shows a compositional bias: low complexity. Ser2063, Ser2076, and Ser2079 each carry phosphoserine. 5 stretches are compositionally biased toward low complexity: residues 2112–2137 (QPGM…HQQP), 2146–2160 (QAGV…QQQA), 2196–2219 (QLLQ…QGSA), 2228–2263 (HGQF…SMGQ), and 2294–2305 (RILQQQQMKQQI). Disordered regions lie at residues 2112-2263 (QPGM…SMGQ) and 2294-2433 (RILQ…TTGD). Polar residues-rich tracts occupy residues 2315–2327 (SPQQ…QPQA) and 2334–2343 (QIATSLSNQV). The span at 2349–2372 (VQSPRPQSQPPHSSPSPRIQPQPS) shows a compositional bias: pro residues. Position 2351 is a phosphoserine (Ser2351). The span at 2411–2424 (QLNTPSRSALSSEL) shows a compositional bias: polar residues.

In terms of assembly, found in a complex containing NCOA2; NCOA3; IKKA; IKKB and IKBKG. Probably part of a complex with HIF1A and EP300. Interacts with GATA1; the interaction results in acetylation and enhancement of transcriptional activity of GATA1. Interacts with MAF and ZCCHC12. Interacts with DAXX; the interaction is dependent on CBP sumoylation and results in suppression of the transcriptional activity via recruitment of HDAC2 to DAXX. Interacts with phosphorylated CREB1. Interacts with CITED4 (C-terminal region). Interacts (via the TAZ-type 1 domain) with HIF1A. Interacts with SRCAP, CARM1, ELF3, MLLT7/FOXO4, N4BP2, NCOA1, NCOA3, NCOA6, PCAF, DDX5, DDX17, PELP1, PML, SMAD1, SMAD2, SMAD3, SPIB and TRERF1. Interacts with KLF1; the interaction results in acetylation of KLF1 and enhancement of its transcriptional activity. Interacts with MTDH. Interacts with NFATC4. Interacts with MAFG; the interaction acetylates MAFG in the basic region and stimulates NFE2 transcriptional activity through increasing its DNA-binding activity. Interacts with IRF2; the interaction acetylates IRF2 and regulates its activity on the H4 promoter. Interacts with IRF3 (when phosphorylated); forming the dsRNA-activated factor 1 (DRAF1), a complex which activates the transcription of the type I interferon genes. Interacts (via N-terminus) with SS18L1/CREST (via C-terminus). Interacts with MECOM. Interacts with CITED1 (via C-terminus). Interacts with FOXO1; the interaction acetylates FOXO1 and inhibits its transcriptional activity. Interacts with NPAS2, CLOCK and BMAL1. Interacts with ASF1A and ASF1B; this promotes histone acetylation. Interacts with acetylated TP53/p53 and with the acetylated histones H3 and H4. Interacts (via transactivation domain and C-terminus) with PCNA; the interaction occurs on chromatin in UV-irradiated damaged cells. Interacts with DHX9 (via N-terminus); this interaction mediates association with RNA polymerase II holoenzyme and stimulates CREB-dependent transcriptional activation. Interacts with SMAD4; negatively regulated by ZBTB7A. Interacts with DUX4 (via C-terminus). Forms a complex with KMT2A and CREB1. Interacts with DDX3X; this interaction may facilitate HNF4A acetylation. Interacts with MSX1; the interaction may inhibit MSX1 autoinactivation. Interacts with ACSS2. (Microbial infection) Interacts with HTLV-1 Tax, p30II and HBZ. As to quaternary structure, (Microbial infection) Interacts with human herpes virus 8/HHV-8 protein vIRF-1; this interaction inhibits CREBBP binding to IRF3. In terms of assembly, (Microbial infection) Interacts with HIV-1 Tat. In terms of processing, methylation of the KIX domain by CARM1 blocks association with CREB. This results in the blockade of CREB signaling, and in activation of apoptotic response. Post-translationally, phosphorylated by CHUK/IKKA at Ser-1382 and Ser-1386; these phosphorylations promote cell growth by switching the binding preference of CREBBP from TP53 to NF-kappa-B. Phosphorylated by _ at Ser-124 in response to DNA damage, promoting interaction with MRE11 and lactylation of MRE11. Sumoylation negatively regulates transcriptional activity via the recruitment of DAAX. In terms of processing, autoacetylation is required for binding to protein substrates, such as acetylated histones and acetylated TP53/p53. Autoacetylation is induced by glucose and fatty acids.

The protein resides in the cytoplasm. Its subcellular location is the nucleus. It carries out the reaction L-lysyl-[histone] + acetyl-CoA = N(6)-acetyl-L-lysyl-[histone] + CoA + H(+). The catalysed reaction is L-lysyl-[protein] + acetyl-CoA = N(6)-acetyl-L-lysyl-[protein] + CoA + H(+). The enzyme catalyses (S)-lactoyl-CoA + L-lysyl-[protein] = N(6)-[(S)-lactoyl]-L-lysyl-[protein] + CoA + H(+). Acetylates histones, giving a specific tag for transcriptional activation. Mediates acetylation of histone H3 at 'Lys-18' and 'Lys-27' (H3K18ac and H3K27ac, respectively). Also acetylates non-histone proteins, like DDX21, FBL, IRF2, MAFG, NCOA3, POLR1E/PAF53 and FOXO1. Binds specifically to phosphorylated CREB and enhances its transcriptional activity toward cAMP-responsive genes. Acts as a coactivator of ALX1. Acts as a circadian transcriptional coactivator which enhances the activity of the circadian transcriptional activators: NPAS2-BMAL1 and CLOCK-BMAL1 heterodimers. Acetylates PCNA; acetylation promotes removal of chromatin-bound PCNA and its degradation during nucleotide excision repair (NER). Acetylates POLR1E/PAF53, leading to decreased association of RNA polymerase I with the rDNA promoter region and coding region. Acetylates DDX21, thereby inhibiting DDX21 helicase activity. Acetylates FBL, preventing methylation of 'Gln-105' of histone H2A (H2AQ104me). In addition to protein acetyltransferase, can use different acyl-CoA substrates, such as lactoyl-CoA, and is able to mediate protein lactylation. Catalyzes lactylation of MRE11 in response to DNA damage, thereby promoting DNA double-strand breaks (DSBs) via homologous recombination (HR). Functions as a transcriptional coactivator for SMAD4 in the TGF-beta signaling pathway. In Homo sapiens (Human), this protein is CREB-binding protein.